Here is a 99-residue protein sequence, read N- to C-terminus: Probable small ribosomal subunit protein cS23 (99 aa).

Belongs to the chloroplast-specific ribosomal protein cS23 family. Part of the 30S ribosomal subunit.

In terms of biological role, probably a ribosomal protein or a ribosome-associated protein. This chain is Probable small ribosomal subunit protein cS23, found in Synechococcus sp. (strain JA-3-3Ab) (Cyanobacteria bacterium Yellowstone A-Prime).